Consider the following 262-residue polypeptide: Phosphatase SCO2771 (262 aa).

Its function is as follows. Displays phosphatase activity against p-nitrophenyl phosphate (pNPP) in vitro; however, the physiological substrate is unknown. This chain is Phosphatase SCO2771, found in Streptomyces coelicolor (strain ATCC BAA-471 / A3(2) / M145).